A 578-amino-acid chain; its full sequence is Adhesion G protein-coupled receptor A1 (578 aa).

The Extracellular segment spans residues M1–P22. Residues V23 to I43 traverse the membrane as a helical segment. The Cytoplasmic portion of the chain corresponds to L44–R56. A helical transmembrane segment spans residues H57 to I77. Residues N78–Q87 are Extracellular-facing. A helical membrane pass occupies residues A88–A108. Over R109 to R137 the chain is Cytoplasmic. Residues F138–I158 form a helical membrane-spanning segment. Topologically, residues R159–S178 are extracellular. A helical transmembrane segment spans residues L179–C199. Over T200–R262 the chain is Cytoplasmic. A disordered region spans residues E216–R236. The helical transmembrane segment at A263 to S283 threads the bilayer. The Extracellular segment spans residues Q284–D289. The chain crosses the membrane as a helical span at residues M290–H310. Disordered regions lie at residues P463–M486 and S537–V578. Over residues S469–S481 the composition is skewed to low complexity. A compositionally biased stretch (polar residues) spans S537–L548.

Belongs to the G-protein coupled receptor 2 family. Adhesion G-protein coupled receptor (ADGR) subfamily. In terms of tissue distribution, predominantly expressed in CNS.

It localises to the membrane. This Mus musculus (Mouse) protein is Adhesion G protein-coupled receptor A1.